Consider the following 261-residue polypeptide: Small ribosomal subunit protein eS4B (261 aa).

The residue at position 32 (Ser-32) is a Phosphoserine. One can recognise an S4 RNA-binding domain in the interval 42 to 105 (LPLIVFLRNR…NENFRLVYDV (64 aa)). Lys-62 participates in a covalent cross-link: Glycyl lysine isopeptide (Lys-Gly) (interchain with G-Cter in ubiquitin). Position 115 is a phosphothreonine (Thr-115). Glycyl lysine isopeptide (Lys-Gly) (interchain with G-Cter in ubiquitin) cross-links involve residues Lys-134, Lys-161, Lys-168, Lys-174, Lys-179, Lys-211, and Lys-233. Residue Ser-247 is modified to Phosphoserine.

It belongs to the eukaryotic ribosomal protein eS4 family. In terms of assembly, component of the small ribosomal subunit (SSU). Mature yeast ribosomes consist of a small (40S) and a large (60S) subunit. The 40S small subunit contains 1 molecule of ribosomal RNA (18S rRNA) and 33 different proteins (encoded by 57 genes). The large 60S subunit contains 3 rRNA molecules (25S, 5.8S and 5S rRNA) and 46 different proteins (encoded by 81 genes).

It localises to the cytoplasm. Functionally, component of the ribosome, a large ribonucleoprotein complex responsible for the synthesis of proteins in the cell. The small ribosomal subunit (SSU) binds messenger RNAs (mRNAs) and translates the encoded message by selecting cognate aminoacyl-transfer RNA (tRNA) molecules. The large subunit (LSU) contains the ribosomal catalytic site termed the peptidyl transferase center (PTC), which catalyzes the formation of peptide bonds, thereby polymerizing the amino acids delivered by tRNAs into a polypeptide chain. The nascent polypeptides leave the ribosome through a tunnel in the LSU and interact with protein factors that function in enzymatic processing, targeting, and the membrane insertion of nascent chains at the exit of the ribosomal tunnel. The chain is Small ribosomal subunit protein eS4B from Saccharomyces cerevisiae (strain ATCC 204508 / S288c) (Baker's yeast).